Here is a 695-residue protein sequence, read N- to C-terminus: Nucleoprotein (695 aa).

Coiled coils occupy residues V316 to E341 and Q372 to Q399. The disordered stretch occupies residues Q424–R611. Positions V438–T447 are enriched in basic and acidic residues. Composition is skewed to polar residues over residues R495–G505 and T537–E552. Positions P603–P606 match the PTAP/PSAP motif motif.

This sequence belongs to the filoviruses nucleoprotein family. Homooligomer. Homomultimerizes to form the nucleocapsid. Binds to viral genomic RNA. Interacts with VP35 and VP30 to form the nucleocapsid. Also interacts with VP24 and VP40. Post-translationally, phosphorylated.

The protein localises to the virion. The protein resides in the host cytoplasm. Functionally, encapsidates the genome, protecting it from nucleases. The encapsidated genomic RNA is termed the nucleocapsid and serves as template for transcription and replication. During replication, encapsidation by NP is coupled to RNA synthesis and all replicative products are resistant to nucleases. This is Nucleoprotein (NP) from Chlorocebus aethiops (Green monkey).